Reading from the N-terminus, the 146-residue chain is Metallothiol transferase FosB (146 aa).

Residues 4-120 enclose the VOC domain; sequence GINHMTFSVS…DGHLLEVHTG (117 aa). Mg(2+)-binding residues include H7, H66, and E116. Residue E116 is the Proton donor/acceptor of the active site.

The protein belongs to the fosfomycin resistance protein family. FosB subfamily. As to quaternary structure, homodimer. The cofactor is Mg(2+).

The protein localises to the cytoplasm. Its function is as follows. Metallothiol transferase which confers resistance to fosfomycin by catalyzing the addition of a thiol cofactor to fosfomycin. L-cysteine is probably the physiological thiol donor. This is Metallothiol transferase FosB from Shouchella clausii (strain KSM-K16) (Alkalihalobacillus clausii).